Reading from the N-terminus, the 177-residue chain is ATP synthase subunit b (177 aa).

Residues 16 to 36 form a helical membrane-spanning segment; the sequence is HLLLANMIVTIVVFLLLLILL.

Belongs to the ATPase B chain family. As to quaternary structure, F-type ATPases have 2 components, F(1) - the catalytic core - and F(0) - the membrane proton channel. F(1) has five subunits: alpha(3), beta(3), gamma(1), delta(1), epsilon(1). F(0) has three main subunits: a(1), b(2) and c(10-14). The alpha and beta chains form an alternating ring which encloses part of the gamma chain. F(1) is attached to F(0) by a central stalk formed by the gamma and epsilon chains, while a peripheral stalk is formed by the delta and b chains.

It is found in the cell membrane. In terms of biological role, f(1)F(0) ATP synthase produces ATP from ADP in the presence of a proton or sodium gradient. F-type ATPases consist of two structural domains, F(1) containing the extramembraneous catalytic core and F(0) containing the membrane proton channel, linked together by a central stalk and a peripheral stalk. During catalysis, ATP synthesis in the catalytic domain of F(1) is coupled via a rotary mechanism of the central stalk subunits to proton translocation. Its function is as follows. Component of the F(0) channel, it forms part of the peripheral stalk, linking F(1) to F(0). The chain is ATP synthase subunit b from Exiguobacterium sibiricum (strain DSM 17290 / CCUG 55495 / CIP 109462 / JCM 13490 / 255-15).